We begin with the raw amino-acid sequence, 866 residues long: Leucine--tRNA ligase (866 aa).

Positions 42–52 (PYPSGKLHMGH) match the 'HIGH' region motif. Residues 624–628 (TMSKS) carry the 'KMSKS' region motif. Residue Lys627 coordinates ATP.

The protein belongs to the class-I aminoacyl-tRNA synthetase family.

The protein resides in the cytoplasm. The catalysed reaction is tRNA(Leu) + L-leucine + ATP = L-leucyl-tRNA(Leu) + AMP + diphosphate. This Nitrosospira multiformis (strain ATCC 25196 / NCIMB 11849 / C 71) protein is Leucine--tRNA ligase.